The sequence spans 445 residues: Competence protein E (445 aa).

The signal sequence occupies residues 1–23 (MKKYFLKCGYFLVCFCLPLIVFA).

This sequence belongs to the bacterial secretin family. PilQ subfamily.

Its subcellular location is the cell outer membrane. Functionally, involved in transformation (genetic competence for DNA uptake). In Haemophilus influenzae (strain ATCC 51907 / DSM 11121 / KW20 / Rd), this protein is Competence protein E (comE).